Consider the following 375-residue polypeptide: Mitochondrial phosphate carrier protein 3, mitochondrial (375 aa).

The helical transmembrane segment at 76–96 (AFYAACTFGGILSCGLTHMTV) threads the bilayer. 3 Solcar repeats span residues 76 to 160 (AFYA…FKKT), 173 to 257 (YKTL…IVEM), and 274 to 353 (LQLG…FKVF). Residues 97–134 (TPLDLVKCNMQIDPAKYKSISSGFGILLKEQGVKGFFR) are Mitochondrial matrix-facing. The helical transmembrane segment at 135–154 (GWVPTLLGYSAQGACKFGFY) threads the bilayer. The Mitochondrial intermembrane segment spans residues 155–175 (EYFKKTYSDLAGPEYTAKYKT). The chain crosses the membrane as a helical span at residues 176-196 (LIYLAGSASAEIIADIALCPF). At 197 to 231 (EAVKVRVQTQPGFARGMSDGFPKFIKSEGYGGLYK) the chain is on the mitochondrial matrix side. The chain crosses the membrane as a helical span at residues 232-251 (GLAPLWGRQIPYTMMKFASF). Residues 252-272 (ETIVEMIYKYAIPNPKSECSK) are Mitochondrial intermembrane-facing. The chain crosses the membrane as a helical span at residues 273-293 (GLQLGVSFAGGYVAGVFCAIV). Topologically, residues 294–332 (SHPADNLVSFLNNAKGATVGDAVKKIGMVGLFTRGLPLR) are mitochondrial matrix. The chain crosses the membrane as a helical span at residues 333–353 (IVMIGTLTGAQWGLYDAFKVF). Topologically, residues 354–375 (VGLPTTGGVAPAPAIAATEAKA) are mitochondrial intermembrane.

Belongs to the mitochondrial carrier (TC 2.A.29) family. As to expression, expressed in stems, leaves and flowers. Strong expression in vascular tissues.

The protein resides in the mitochondrion inner membrane. Its function is as follows. Transport of phosphate groups from the cytosol to the mitochondrial matrix. Mediates salt stress tolerance through an ATP-dependent pathway and via modulation of the gibberellin metabolism. The sequence is that of Mitochondrial phosphate carrier protein 3, mitochondrial (MPT3) from Arabidopsis thaliana (Mouse-ear cress).